The sequence spans 530 residues: Chaperone Ric-8A (530 aa).

S435 carries the phosphoserine modification. Phosphothreonine occurs at positions 440 and 442. 4 positions are modified to phosphoserine: S501, S522, S523, and S527.

It belongs to the synembryn family. As to quaternary structure, interacts with GDP-bound G alpha proteins GNAI1, GNAO1 and GNAQ, and with GNA13 with lower affinity. Does not interact with G-alpha proteins when they are in complex with subunits beta and gamma. Interacts (via C-terminus) with RGS14; the interaction stimulates the dissociation of the complex between RGS14 and the active GTP-bound form of GNAI1. Interacts with NCS1; interaction is favored in the absence of Ca(2+) and myristoylation of NCS1 is not required. Phosphorylated at Ser-435 and Thr-440 by CK2, stabilizing its interface with G alpha proteins.

The protein resides in the cytoplasm. It is found in the cell cortex. In terms of biological role, chaperone that specifically binds and folds nascent G alpha proteins prior to G protein heterotrimer formation, promoting their stability and activity: folds GNAI1, GNAO1, GNA13 and GNAQ. Does not fold G(s) G-alpha proteins GNAS nor GNAL. Also acts as a guanine nucleotide exchange factor (GEF) for G alpha proteins by stimulating exchange of bound GDP for free GTP. Involved in regulation of microtubule pulling forces during mitotic movement of chromosomes by stimulating G(i)-alpha protein (GNAI1), possibly leading to release G(i)-alpha-GTP and NuMA proteins from the NuMA-GPSM2-G(i)-alpha-GDP complex. Also acts as an activator for G(q)-alpha (GNAQ) protein by enhancing the G(q)-coupled receptor-mediated ERK activation. The sequence is that of Chaperone Ric-8A (RIC8A) from Macaca fascicularis (Crab-eating macaque).